Consider the following 183-residue polypeptide: BLOC-1-related complex subunit 8 homolog (183 aa).

Positions 152–183 are disordered; it reads MIGPGTATGRTEAQAATSSNPGELQRSYTTLH. The segment covering 159-183 has biased composition (polar residues); sequence TGRTEAQAATSSNPGELQRSYTTLH.

Belongs to the BORCS8 family.

The protein localises to the lysosome membrane. Its function is as follows. May participate in the coupling of lysosomes to microtubule plus-end-directed kinesin motor. In Drosophila melanogaster (Fruit fly), this protein is BLOC-1-related complex subunit 8 homolog.